The chain runs to 346 residues: D-alanine--D-alanine ligase (346 aa).

The ATP-grasp domain occupies 133-326 (KFLAQKAGVK…LANSLPKERE (194 aa)). An ATP-binding site is contributed by 159–209 (YPIILKPARLGSSIGVSVVHDDSELAYAKDVAFEFDKDVLVEPFIKGVKEY). 3 residues coordinate Mg(2+): D282, E294, and N296.

Belongs to the D-alanine--D-alanine ligase family. Mg(2+) is required as a cofactor. The cofactor is Mn(2+).

It is found in the cytoplasm. It carries out the reaction 2 D-alanine + ATP = D-alanyl-D-alanine + ADP + phosphate + H(+). It participates in cell wall biogenesis; peptidoglycan biosynthesis. Cell wall formation. This is D-alanine--D-alanine ligase from Campylobacter concisus (strain 13826).